Reading from the N-terminus, the 240-residue chain is Small ribosomal subunit protein uS3 (240 aa).

The KH type-2 domain occupies 39-108 (LRKFLKKKLY…ELILNIKEER (70 aa)). Positions 213 to 224 (MNSDDTATPERK) are enriched in basic and acidic residues. The tract at residues 213–240 (MNSDDTATPERKAPRRRKGRRNVNAKKN) is disordered. Positions 225–240 (APRRRKGRRNVNAKKN) are enriched in basic residues.

The protein belongs to the universal ribosomal protein uS3 family. As to quaternary structure, part of the 30S ribosomal subunit. Forms a tight complex with proteins S10 and S14.

Its function is as follows. Binds the lower part of the 30S subunit head. Binds mRNA in the 70S ribosome, positioning it for translation. This is Small ribosomal subunit protein uS3 from Nautilia profundicola (strain ATCC BAA-1463 / DSM 18972 / AmH).